The primary structure comprises 356 residues: Molybdenum import ATP-binding protein ModC (356 aa).

Positions 1-232 constitute an ABC transporter domain; sequence MEDIHARFHI…LDLPIRLGED (232 aa). An ATP-binding site is contributed by 33–40; it reads GHSGSGKT. One can recognise a Mop domain in the interval 291 to 356; sequence ETSVLNLLRG…VQVKSVALME (66 aa).

This sequence belongs to the ABC transporter superfamily. Molybdate importer (TC 3.A.1.8) family. In terms of assembly, the complex is composed of two ATP-binding proteins (ModC), two transmembrane proteins (ModB) and a solute-binding protein (ModA).

It localises to the cell inner membrane. It catalyses the reaction molybdate(out) + ATP + H2O = molybdate(in) + ADP + phosphate + H(+). Functionally, part of the ABC transporter complex ModABC involved in molybdenum import. Responsible for energy coupling to the transport system. This chain is Molybdenum import ATP-binding protein ModC, found in Methylococcus capsulatus (strain ATCC 33009 / NCIMB 11132 / Bath).